The primary structure comprises 477 residues: Monocarboxylate transporter 12-B (477 aa).

Over 1–9 (MAQEKKKGG) the chain is Cytoplasmic. The next 12 membrane-spanning stretches (helical) occupy residues 10–30 (VLPPDGGWGWMIVAGCFVVTV), 58–78 (AWIHSLVDCTTMLCAPLGSLI), 86–106 (IAVILGGFLASVGLVLSSFAT), 116–136 (GLLTGLGFALCYTPAIAMVGI), 148–168 (IAMSGSGIGTFILAPVVQLLI), 178–198 (LILGGFVLNLCVCGALLRPII), 253–273 (FLVLAGSFLLLASGCSLPFVY), 289–309 (AFLMSILGVIDIVGNITFGWL), 320–340 (NICYMFAVGMEGLCCLFIPLL), 344–364 (VWLVPFSVLYGYFDGAYVALI), 383–403 (VVYFLHAVPYLVSPPIGGWLV), and 413–433 (FFLSGFALISSSLLLFSVAII). The Cytoplasmic segment spans residues 434–477 (RYCQRNQKKNSLSKIPKLVSCEGKQVDYYPPKNKDLMLIIPATS).

It belongs to the major facilitator superfamily. Monocarboxylate porter (TC 2.A.1.13) family.

It is found in the cell membrane. It localises to the basolateral cell membrane. It carries out the reaction creatine(in) = creatine(out). The enzyme catalyses guanidinoacetate(in) = guanidinoacetate(out). Its function is as follows. Functions as a transporter for creatine and as well for its precursor guanidinoacetate. Transport of creatine and GAA is independent of resting membrane potential and extracellular Na(+), Cl(-), or pH. Contributes to the process of creatine biosynthesis and distribution. This chain is Monocarboxylate transporter 12-B (slc16a12b), found in Danio rerio (Zebrafish).